Consider the following 179-residue polypeptide: Large ribosomal subunit protein uL5 (179 aa).

It belongs to the universal ribosomal protein uL5 family. Part of the 50S ribosomal subunit; part of the 5S rRNA/L5/L18/L25 subcomplex. Contacts the 5S rRNA and the P site tRNA. Forms a bridge to the 30S subunit in the 70S ribosome.

Its function is as follows. This is one of the proteins that bind and probably mediate the attachment of the 5S RNA into the large ribosomal subunit, where it forms part of the central protuberance. In the 70S ribosome it contacts protein S13 of the 30S subunit (bridge B1b), connecting the 2 subunits; this bridge is implicated in subunit movement. Contacts the P site tRNA; the 5S rRNA and some of its associated proteins might help stabilize positioning of ribosome-bound tRNAs. In Bacillus licheniformis (strain ATCC 14580 / DSM 13 / JCM 2505 / CCUG 7422 / NBRC 12200 / NCIMB 9375 / NCTC 10341 / NRRL NRS-1264 / Gibson 46), this protein is Large ribosomal subunit protein uL5.